The primary structure comprises 227 residues: Urease accessory protein UreE (227 aa).

The tract at residues 192 to 227 (PHGSGLHVHAIHSHGHSHSHDHDHDHNHDHDHKHKQ) is disordered. The span at 209–221 (HSHDHDHDHNHDH) shows a compositional bias: basic and acidic residues.

The protein belongs to the UreE family.

It localises to the cytoplasm. Functionally, involved in urease metallocenter assembly. Binds nickel. Probably functions as a nickel donor during metallocenter assembly. The chain is Urease accessory protein UreE from Yersinia bercovieri.